A 182-amino-acid chain; its full sequence is Large ribosomal subunit protein bL25 (182 aa).

It belongs to the bacterial ribosomal protein bL25 family. CTC subfamily. In terms of assembly, part of the 50S ribosomal subunit; part of the 5S rRNA/L5/L18/L25 subcomplex. Contacts the 5S rRNA. Binds to the 5S rRNA independently of L5 and L18.

Its function is as follows. This is one of the proteins that binds to the 5S RNA in the ribosome where it forms part of the central protuberance. This is Large ribosomal subunit protein bL25 from Borrelia turicatae (strain 91E135).